The chain runs to 408 residues: Translation initiation factor 2 subunit gamma (408 aa).

Residues 4–201 enclose the tr-type G domain; it reads QSEINIGLVG…TIEERIKTPK (198 aa). The interval 13–20 is G1; sequence GHVDHGKT. Residues D16, T20, G41, and S43 each coordinate Mg(2+). 16–21 serves as a coordination point for GTP; the sequence is DHGKTT. The segment at 41–45 is G2; the sequence is GISIR. 4 residues coordinate Zn(2+): C56, C59, C71, and C74. The G3 stretch occupies residues 88 to 91; the sequence is DAPG. GTP contacts are provided by residues 144-147 and 179-181; these read NKID and SAQ. The interval 144-147 is G4; it reads NKID. The interval 179–181 is G5; it reads SAQ.

Belongs to the TRAFAC class translation factor GTPase superfamily. Classic translation factor GTPase family. EIF2G subfamily. Heterotrimer composed of an alpha, a beta and a gamma chain. The cofactor is Mg(2+).

It carries out the reaction GTP + H2O = GDP + phosphate + H(+). Functionally, eIF-2 functions in the early steps of protein synthesis by forming a ternary complex with GTP and initiator tRNA. The sequence is that of Translation initiation factor 2 subunit gamma from Methanothermobacter thermautotrophicus (strain ATCC 29096 / DSM 1053 / JCM 10044 / NBRC 100330 / Delta H) (Methanobacterium thermoautotrophicum).